We begin with the raw amino-acid sequence, 562 residues long: Arginine--tRNA ligase (562 aa).

The 'HIGH' region signature appears at 121 to 131; the sequence is PNIAKPFSVGH.

This sequence belongs to the class-I aminoacyl-tRNA synthetase family. Monomer.

It localises to the cytoplasm. It carries out the reaction tRNA(Arg) + L-arginine + ATP = L-arginyl-tRNA(Arg) + AMP + diphosphate. The protein is Arginine--tRNA ligase of Streptococcus uberis (strain ATCC BAA-854 / 0140J).